Here is a 216-residue protein sequence, read N- to C-terminus: Redox-sensing transcriptional repressor Rex (216 aa).

The segment at residues Val16 to Phe55 is a DNA-binding region (H-T-H motif). Gly90–Gly95 is a binding site for NAD(+).

Belongs to the transcriptional regulatory Rex family. As to quaternary structure, homodimer.

The protein localises to the cytoplasm. In terms of biological role, modulates transcription in response to changes in cellular NADH/NAD(+) redox state. This chain is Redox-sensing transcriptional repressor Rex, found in Limosilactobacillus fermentum (strain NBRC 3956 / LMG 18251) (Lactobacillus fermentum).